The following is a 173-amino-acid chain: Lipoprotein signal peptidase (173 aa).

A run of 3 helical transmembrane segments spans residues 12-32, 67-87, and 102-122; these read WLWL…WTIQ, WQRY…VYLL, and ALIL…GYVI. Catalysis depends on residues aspartate 123 and aspartate 141. A helical transmembrane segment spans residues 137–157; that stretch reads FNIADSAIFTGAVIMIFESFF.

The protein belongs to the peptidase A8 family.

Its subcellular location is the cell inner membrane. It carries out the reaction Release of signal peptides from bacterial membrane prolipoproteins. Hydrolyzes -Xaa-Yaa-Zaa-|-(S,diacylglyceryl)Cys-, in which Xaa is hydrophobic (preferably Leu), and Yaa (Ala or Ser) and Zaa (Gly or Ala) have small, neutral side chains.. The protein operates within protein modification; lipoprotein biosynthesis (signal peptide cleavage). In terms of biological role, this protein specifically catalyzes the removal of signal peptides from prolipoproteins. This is Lipoprotein signal peptidase from Psychromonas ingrahamii (strain DSM 17664 / CCUG 51855 / 37).